Consider the following 213-residue polypeptide: Small ribosomal subunit protein uS3 (213 aa).

The KH type-2 domain occupies 38–106 (IRKYVKKTLY…EFSIEVNEIR (69 aa)).

It belongs to the universal ribosomal protein uS3 family. In terms of assembly, part of the 30S ribosomal subunit. Forms a tight complex with proteins S10 and S14.

Binds the lower part of the 30S subunit head. Binds mRNA in the 70S ribosome, positioning it for translation. In Oleidesulfovibrio alaskensis (strain ATCC BAA-1058 / DSM 17464 / G20) (Desulfovibrio alaskensis), this protein is Small ribosomal subunit protein uS3.